Reading from the N-terminus, the 92-residue chain is MPRSLKKGPFIDLHLLKKVEKAVESGDKKPIKTWSRRSMIIPTMIGLTIAVHNGRQHVPVFVTDEMIGHKLGEFAPTRTYRGHAADKKAKKR.

This sequence belongs to the universal ribosomal protein uS19 family.

Protein S19 forms a complex with S13 that binds strongly to the 16S ribosomal RNA. In Vibrio parahaemolyticus serotype O3:K6 (strain RIMD 2210633), this protein is Small ribosomal subunit protein uS19.